The following is a 329-amino-acid chain: NADH-quinone oxidoreductase subunit H (329 aa).

8 consecutive transmembrane segments (helical) span residues 9-29, 79-99, 117-137, 162-182, 188-208, 243-263, 269-289, and 309-329; these read ILKV…LTYV, IAPV…PFFP, VGIL…LLAG, VSGL…LIEI, GGIF…FLIA, FFIG…LLFF, LWFI…LFLF, and WKVL…VLIL.

Belongs to the complex I subunit 1 family. NDH-1 is composed of 14 different subunits. Subunits NuoA, H, J, K, L, M, N constitute the membrane sector of the complex.

The protein resides in the cell inner membrane. It carries out the reaction a quinone + NADH + 5 H(+)(in) = a quinol + NAD(+) + 4 H(+)(out). Its function is as follows. NDH-1 shuttles electrons from NADH, via FMN and iron-sulfur (Fe-S) centers, to quinones in the respiratory chain. The immediate electron acceptor for the enzyme in this species is believed to be ubiquinone. Couples the redox reaction to proton translocation (for every two electrons transferred, four hydrogen ions are translocated across the cytoplasmic membrane), and thus conserves the redox energy in a proton gradient. This subunit may bind ubiquinone. The sequence is that of NADH-quinone oxidoreductase subunit H from Wolinella succinogenes (strain ATCC 29543 / DSM 1740 / CCUG 13145 / JCM 31913 / LMG 7466 / NCTC 11488 / FDC 602W) (Vibrio succinogenes).